Here is a 150-residue protein sequence, read N- to C-terminus: Cytochrome c oxidase subunit 5A, mitochondrial (150 aa).

Residues 1–41 (MLGAALRRCAVAATTWAGPRGLLHSSRTPGPAAAIQSVRCY) constitute a mitochondrion transit peptide. Positions 2 to 17 (LGAALRRCAVAATTWA) match the SIFI-degron motif. An N6-acetyllysine mark is found at Lys87 and Lys113. A Phosphothreonine modification is found at Thr141.

This sequence belongs to the cytochrome c oxidase subunit 5A family. In terms of assembly, component of the cytochrome c oxidase (complex IV, CIV), a multisubunit enzyme composed of 14 subunits. The complex is composed of a catalytic core of 3 subunits MT-CO1, MT-CO2 and MT-CO3, encoded in the mitochondrial DNA, and 11 supernumerary subunits COX4I, COX5A, COX5B, COX6A, COX6B, COX6C, COX7A, COX7B, COX7C, COX8 and NDUFA4, which are encoded in the nuclear genome. The complex exists as a monomer or a dimer and forms supercomplexes (SCs) in the inner mitochondrial membrane with NADH-ubiquinone oxidoreductase (complex I, CI) and ubiquinol-cytochrome c oxidoreductase (cytochrome b-c1 complex, complex III, CIII), resulting in different assemblies (supercomplex SCI(1)III(2)IV(1) and megacomplex MCI(2)III(2)IV(2)). Interacts with AFG1L. Interacts with RAB5IF. In terms of processing, in response to mitochondrial stress, the precursor protein is ubiquitinated by the SIFI complex in the cytoplasm before mitochondrial import, leading to its degradation. Within the SIFI complex, UBR4 initiates ubiquitin chain that are further elongated or branched by KCMF1.

The protein localises to the mitochondrion inner membrane. It participates in energy metabolism; oxidative phosphorylation. In terms of biological role, component of the cytochrome c oxidase, the last enzyme in the mitochondrial electron transport chain which drives oxidative phosphorylation. The respiratory chain contains 3 multisubunit complexes succinate dehydrogenase (complex II, CII), ubiquinol-cytochrome c oxidoreductase (cytochrome b-c1 complex, complex III, CIII) and cytochrome c oxidase (complex IV, CIV), that cooperate to transfer electrons derived from NADH and succinate to molecular oxygen, creating an electrochemical gradient over the inner membrane that drives transmembrane transport and the ATP synthase. Cytochrome c oxidase is the component of the respiratory chain that catalyzes the reduction of oxygen to water. Electrons originating from reduced cytochrome c in the intermembrane space (IMS) are transferred via the dinuclear copper A center (CU(A)) of subunit 2 and heme A of subunit 1 to the active site in subunit 1, a binuclear center (BNC) formed by heme A3 and copper B (CU(B)). The BNC reduces molecular oxygen to 2 water molecules using 4 electrons from cytochrome c in the IMS and 4 protons from the mitochondrial matrix. This is Cytochrome c oxidase subunit 5A, mitochondrial (COX5A) from Colobus guereza (Mantled guereza).